The chain runs to 183 residues: Translation initiation factor IF-3 (183 aa).

Belongs to the IF-3 family. In terms of assembly, monomer.

It localises to the cytoplasm. In terms of biological role, IF-3 binds to the 30S ribosomal subunit and shifts the equilibrium between 70S ribosomes and their 50S and 30S subunits in favor of the free subunits, thus enhancing the availability of 30S subunits on which protein synthesis initiation begins. In Yersinia pseudotuberculosis serotype O:1b (strain IP 31758), this protein is Translation initiation factor IF-3.